The chain runs to 235 residues: Sugar fermentation stimulation protein homolog (235 aa).

This sequence belongs to the SfsA family.

The chain is Sugar fermentation stimulation protein homolog from Aliivibrio salmonicida (strain LFI1238) (Vibrio salmonicida (strain LFI1238)).